Here is a 137-residue protein sequence, read N- to C-terminus: Putative pre-16S rRNA nuclease (137 aa).

This sequence belongs to the YqgF nuclease family.

The protein resides in the cytoplasm. Functionally, could be a nuclease involved in processing of the 5'-end of pre-16S rRNA. This is Putative pre-16S rRNA nuclease from Bacillus cereus (strain AH187).